A 596-amino-acid polypeptide reads, in one-letter code: Myosin light chain kinase 2, skeletal/cardiac muscle (596 aa).

The interval Met-1–Thr-224 is disordered. Ala-2 is modified (N-acetylalanine). The span at Asp-40–Asp-63 shows a compositional bias: basic and acidic residues. Positions Glu-88 to Pro-104 are enriched in low complexity. Phosphoserine occurs at positions 143, 149, and 151. A compositionally biased stretch (basic and acidic residues) spans Arg-189–Glu-209. Residues Met-285–Leu-540 enclose the Protein kinase domain. ATP contacts are provided by residues Leu-291–Val-299 and Lys-314. Asp-406 serves as the catalytic Proton acceptor. Thr-445 is modified (phosphothreonine). The interval Ile-574–Ser-586 is calmodulin-binding.

The protein belongs to the protein kinase superfamily. CAMK Ser/Thr protein kinase family. May interact with centrin. As to expression, heart and skeletal muscles. Increased expression in the apical tissue compared to the interventricular septal tissue.

The protein resides in the cytoplasm. The enzyme catalyses L-seryl-[myosin light chain] + ATP = O-phospho-L-seryl-[myosin light chain] + ADP + H(+). It carries out the reaction L-threonyl-[myosin light chain] + ATP = O-phospho-L-threonyl-[myosin light chain] + ADP + H(+). Functionally, implicated in the level of global muscle contraction and cardiac function. Phosphorylates a specific serine in the N-terminus of a myosin light chain. The polypeptide is Myosin light chain kinase 2, skeletal/cardiac muscle (MYLK2) (Homo sapiens (Human)).